A 269-amino-acid chain; its full sequence is Putative carbamate hydrolase RutD (269 aa).

The 119-residue stretch at 26 to 144 (VVLLSSGLGG…CFDTRLHLLN (119 aa)) folds into the AB hydrolase-1 domain.

It belongs to the AB hydrolase superfamily. Hydrolase RutD family.

The enzyme catalyses carbamate + 2 H(+) = NH4(+) + CO2. Its function is as follows. Involved in pyrimidine catabolism. May facilitate the hydrolysis of carbamate, a reaction that can also occur spontaneously. This Caulobacter vibrioides (strain ATCC 19089 / CIP 103742 / CB 15) (Caulobacter crescentus) protein is Putative carbamate hydrolase RutD.